The sequence spans 157 residues: Ribosomal RNA large subunit methyltransferase H (157 aa).

S-adenosyl-L-methionine-binding positions include L74, G106, and 125-130; that span reads LGNITF.

It belongs to the RNA methyltransferase RlmH family. In terms of assembly, homodimer.

It is found in the cytoplasm. The enzyme catalyses pseudouridine(1915) in 23S rRNA + S-adenosyl-L-methionine = N(3)-methylpseudouridine(1915) in 23S rRNA + S-adenosyl-L-homocysteine + H(+). In terms of biological role, specifically methylates the pseudouridine at position 1915 (m3Psi1915) in 23S rRNA. The protein is Ribosomal RNA large subunit methyltransferase H of Lawsonia intracellularis (strain PHE/MN1-00).